The following is a 343-amino-acid chain: 4-hydroxy-2-oxovalerate aldolase 2 (343 aa).

The 251-residue stretch at 5 to 255 (ITIVDTTLRD…DTGVDLFPLI (251 aa)) folds into the Pyruvate carboxyltransferase domain. Substrate contacts are provided by residues 13 to 14 (RD), S167, and H194. D14 contacts Mn(2+). H194 and H196 together coordinate Mn(2+). Y285 serves as a coordination point for substrate.

It belongs to the 4-hydroxy-2-oxovalerate aldolase family.

The catalysed reaction is (S)-4-hydroxy-2-oxopentanoate = acetaldehyde + pyruvate. This is 4-hydroxy-2-oxovalerate aldolase 2 from Rhodococcus jostii (strain RHA1).